Here is a 187-residue protein sequence, read N- to C-terminus: UPF0301 protein CT0663 (187 aa).

The protein belongs to the UPF0301 (AlgH) family.

In Chlorobaculum tepidum (strain ATCC 49652 / DSM 12025 / NBRC 103806 / TLS) (Chlorobium tepidum), this protein is UPF0301 protein CT0663.